The chain runs to 217 residues: Thymidylate kinase (217 aa).

7–14 (GIEGTGKT) serves as a coordination point for ATP.

Belongs to the thymidylate kinase family.

It carries out the reaction dTMP + ATP = dTDP + ADP. In terms of biological role, phosphorylation of dTMP to form dTDP in both de novo and salvage pathways of dTTP synthesis. The polypeptide is Thymidylate kinase (Maridesulfovibrio salexigens (strain ATCC 14822 / DSM 2638 / NCIMB 8403 / VKM B-1763) (Desulfovibrio salexigens)).